Consider the following 246-residue polypeptide: NH(3)-dependent NAD(+) synthetase (246 aa).

29-36 is an ATP binding site; it reads GLSGGIDS. Asp35 is a binding site for Mg(2+). Arg110 provides a ligand contact to deamido-NAD(+). ATP is bound at residue Thr130. Glu135 is a Mg(2+) binding site. Lys159 and Ser181 together coordinate ATP.

It belongs to the NAD synthetase family. In terms of assembly, homodimer.

The catalysed reaction is deamido-NAD(+) + NH4(+) + ATP = AMP + diphosphate + NAD(+) + H(+). Its pathway is cofactor biosynthesis; NAD(+) biosynthesis; NAD(+) from deamido-NAD(+) (ammonia route): step 1/1. Catalyzes the ATP-dependent amidation of deamido-NAD to form NAD. Uses ammonia as a nitrogen source. The polypeptide is NH(3)-dependent NAD(+) synthetase (Campylobacter jejuni subsp. jejuni serotype O:23/36 (strain 81-176)).